A 430-amino-acid polypeptide reads, in one-letter code: tRNA-2-methylthio-N(6)-dimethylallyladenosine synthase (430 aa).

The region spanning 1-110 (MKVHIFTYGC…VPDAVLNAKN (110 aa)) is the MTTase N-terminal domain. C10, C46, C75, C146, C150, and C153 together coordinate [4Fe-4S] cluster. One can recognise a Radical SAM core domain in the interval 132–363 (RSSNHHAWVT…LNLQKTINKE (232 aa)). One can recognise a TRAM domain in the interval 366-427 (KSYLGKEVEV…AGPLYGEIKK (62 aa)).

It belongs to the methylthiotransferase family. MiaB subfamily. In terms of assembly, monomer. It depends on [4Fe-4S] cluster as a cofactor.

The protein localises to the cytoplasm. It carries out the reaction N(6)-dimethylallyladenosine(37) in tRNA + (sulfur carrier)-SH + AH2 + 2 S-adenosyl-L-methionine = 2-methylsulfanyl-N(6)-dimethylallyladenosine(37) in tRNA + (sulfur carrier)-H + 5'-deoxyadenosine + L-methionine + A + S-adenosyl-L-homocysteine + 2 H(+). In terms of biological role, catalyzes the methylthiolation of N6-(dimethylallyl)adenosine (i(6)A), leading to the formation of 2-methylthio-N6-(dimethylallyl)adenosine (ms(2)i(6)A) at position 37 in tRNAs that read codons beginning with uridine. The sequence is that of tRNA-2-methylthio-N(6)-dimethylallyladenosine synthase from Fervidobacterium nodosum (strain ATCC 35602 / DSM 5306 / Rt17-B1).